We begin with the raw amino-acid sequence, 101 residues long: NAD(P)H-quinone oxidoreductase subunit 4L, chloroplastic (101 aa).

The next 3 membrane-spanning stretches (helical) occupy residues 2–22 (MLEHVLVLSAYLFSIGIYGLI), 32–52 (MCLELILNAVNLNFVTFSDFF), and 61–81 (IFSIFVIAIAAAEAAIGPAIV).

It belongs to the complex I subunit 4L family. As to quaternary structure, NDH is composed of at least 16 different subunits, 5 of which are encoded in the nucleus.

The protein localises to the plastid. It localises to the chloroplast thylakoid membrane. It catalyses the reaction a plastoquinone + NADH + (n+1) H(+)(in) = a plastoquinol + NAD(+) + n H(+)(out). The enzyme catalyses a plastoquinone + NADPH + (n+1) H(+)(in) = a plastoquinol + NADP(+) + n H(+)(out). Functionally, NDH shuttles electrons from NAD(P)H:plastoquinone, via FMN and iron-sulfur (Fe-S) centers, to quinones in the photosynthetic chain and possibly in a chloroplast respiratory chain. The immediate electron acceptor for the enzyme in this species is believed to be plastoquinone. Couples the redox reaction to proton translocation, and thus conserves the redox energy in a proton gradient. In Manihot esculenta (Cassava), this protein is NAD(P)H-quinone oxidoreductase subunit 4L, chloroplastic.